The following is a 397-amino-acid chain: Elongation factor Tu-1 (397 aa).

Residues 10-206 form the tr-type G domain; the sequence is KPHVNIGTIG…AVDENIPEPE (197 aa). Positions 19–26 are G1; it reads GHIDHGKT. 19–26 is a GTP binding site; that stretch reads GHIDHGKT. Threonine 26 is a Mg(2+) binding site. The interval 62 to 66 is G2; the sequence is GITIS. The tract at residues 83 to 86 is G3; that stretch reads DCPG. Residues 83 to 87 and 138 to 141 contribute to the GTP site; these read DCPGH and NKAD. The interval 138 to 141 is G4; sequence NKAD. The interval 176 to 178 is G5; sequence SAL. Residue threonine 386 is modified to Phosphothreonine.

The protein belongs to the TRAFAC class translation factor GTPase superfamily. Classic translation factor GTPase family. EF-Tu/EF-1A subfamily. As to quaternary structure, monomer. In terms of processing, phosphorylated on threonine and serine.

It localises to the cytoplasm. The enzyme catalyses GTP + H2O = GDP + phosphate + H(+). Its function is as follows. GTP hydrolase that promotes the GTP-dependent binding of aminoacyl-tRNA to the A-site of ribosomes during protein biosynthesis. This chain is Elongation factor Tu-1, found in Streptomyces collinus.